We begin with the raw amino-acid sequence, 293 residues long: 33 kDa chaperonin (293 aa).

Cystine bridges form between C235–C237 and C267–C270.

It belongs to the HSP33 family. Under oxidizing conditions two disulfide bonds are formed involving the reactive cysteines. Under reducing conditions zinc is bound to the reactive cysteines and the protein is inactive.

The protein localises to the cytoplasm. Functionally, redox regulated molecular chaperone. Protects both thermally unfolding and oxidatively damaged proteins from irreversible aggregation. Plays an important role in the bacterial defense system toward oxidative stress. The sequence is that of 33 kDa chaperonin from Deinococcus radiodurans (strain ATCC 13939 / DSM 20539 / JCM 16871 / CCUG 27074 / LMG 4051 / NBRC 15346 / NCIMB 9279 / VKM B-1422 / R1).